The following is a 638-amino-acid chain: Carbon monoxide dehydrogenase (638 aa).

Cys46, Cys55, Cys58, Cys63, and Cys74 together coordinate [4Fe-4S] cluster. Residues His265, Cys299, Cys343, Cys452, Cys483, and Cys524 each coordinate [Ni-4Fe-5S] cluster.

Belongs to the Ni-containing carbon monoxide dehydrogenase family. Homodimer. [4Fe-4S] cluster is required as a cofactor. The cofactor is [Ni-4Fe-5S] cluster.

It catalyses the reaction CO + 2 oxidized [2Fe-2S]-[ferredoxin] + H2O = 2 reduced [2Fe-2S]-[ferredoxin] + CO2 + 2 H(+). Functionally, CODH oxidizes carbon monoxide coupled, via CooF, to the reduction of a hydrogen cation by a hydrogenase (possibly CooH). The chain is Carbon monoxide dehydrogenase (cooS) from Methanopyrus kandleri (strain AV19 / DSM 6324 / JCM 9639 / NBRC 100938).